The sequence spans 84 residues: UPF0457 protein BALH_2270 (84 aa).

This sequence belongs to the UPF0457 family.

This is UPF0457 protein BALH_2270 from Bacillus thuringiensis (strain Al Hakam).